A 458-amino-acid polypeptide reads, in one-letter code: MFLKKHKSKLLLVPRDEEQEDAGIVAVLTDRIPSVLLVRWFDLFCFGFAMCSYALDFFSDIGIAIFHFWAGRYLSGSLVLAFALLPSVIINIISMVWMLDDEMHWKRRAHPRRTGTFELNQKRFIPLSKMIVLCICQMGPLFWYYKALYYGWMFRKSSNENTDGEKRKCFSKMVEAERDATLLRFFEAFLESAPQLIIQGSIAASYFQNYYQTGTYPYWLYFQAASLLLSIISISWSVVVQNRSLRMIRDDKVNIWPHEAVLQFCWRFLTILARIITLVALVLIFGINVVPLISVHLLVTLVHVIFLQAIHIDACTHIEKLLLLINTFIHIFIPFNMVEGNTRWRYLTAYSVEFIEMMLVCWLLPLSLNTFPYIEKVQVGVPISFIAGIAIMMMYYQFFHPNRRQLIVTQSQEDLSLNVQKSVETLTPKLESSLEISGEQNTSQDLVSELLLDVEHEN.

Topologically, residues 1 to 45 are cytoplasmic; that stretch reads MFLKKHKSKLLLVPRDEEQEDAGIVAVLTDRIPSVLLVRWFDLFC. A helical transmembrane segment spans residues 46–66; it reads FGFAMCSYALDFFSDIGIAIF. At 67-77 the chain is on the extracellular side; sequence HFWAGRYLSGS. Residues 78-98 form a helical membrane-spanning segment; the sequence is LVLAFALLPSVIINIISMVWM. The Cytoplasmic portion of the chain corresponds to 99–123; it reads LDDEMHWKRRAHPRRTGTFELNQKR. Residues 124–144 form a helical membrane-spanning segment; that stretch reads FIPLSKMIVLCICQMGPLFWY. The Extracellular portion of the chain corresponds to 145 to 219; that stretch reads YKALYYGWMF…YYQTGTYPYW (75 aa). Residues 220–240 traverse the membrane as a helical segment; that stretch reads LYFQAASLLLSIISISWSVVV. Residues 241–274 lie on the Cytoplasmic side of the membrane; it reads QNRSLRMIRDDKVNIWPHEAVLQFCWRFLTILAR. A run of 2 helical transmembrane segments spans residues 275 to 295 and 296 to 316; these read IITL…LISV and HLLV…DACT. Histidine 317 is a topological domain (extracellular). The chain crosses the membrane as a helical span at residues 318 to 338; that stretch reads IEKLLLLINTFIHIFIPFNMV. At 339–353 the chain is on the cytoplasmic side; it reads EGNTRWRYLTAYSVE. The chain crosses the membrane as a helical span at residues 354 to 374; sequence FIEMMLVCWLLPLSLNTFPYI. The Extracellular segment spans residues 375–378; the sequence is EKVQ. Residues 379–399 form a helical membrane-spanning segment; the sequence is VGVPISFIAGIAIMMMYYQFF. Over 400 to 458 the chain is Cytoplasmic; it reads HPNRRQLIVTQSQEDLSLNVQKSVETLTPKLESSLEISGEQNTSQDLVSELLLDVEHEN.

Belongs to the XK family. In terms of processing, cleavage by ced-3 activates ced-8 function in promoting phosphatidylserine exposure at the surface of apoptotic cells.

The protein localises to the cell membrane. The enzyme catalyses a 1,2-diacyl-sn-glycero-3-phospho-L-serine(in) = a 1,2-diacyl-sn-glycero-3-phospho-L-serine(out). In terms of biological role, phospholipid scramblase that acts downstream of ced-9 and caspase ced-3 to promote phosphatidylserine exposure on apoptotic cell surface. Phosphatidylserine is a specific marker only present at the surface of apoptotic cells and acts as a specific signal for engulfment. Regulates apoptosis kinetics during embryonic development. Not required for engulfment of germ cell corpses. The protein is Cell death abnormality protein 8 of Caenorhabditis elegans.